Consider the following 203-residue polypeptide: Pacifastin-like protease inhibitor cvp4 (203 aa).

The first 19 residues, 1–19 (MGFLACALLVVATAHAATA), serve as a signal peptide directing secretion. 3 consecutive Pacifastin domains span residues 23–59 (PETC…CDRN), 85–121 (DEPC…CDRN), and 147–184 (DESC…CDRY). Disulfide bonds link Cys26/Cys41, Cys36/Cys56, Cys39/Cys51, Cys88/Cys103, Cys98/Cys118, and Cys101/Cys113. Over residues 129-148 (RKYPEPEKWNSEKERKKSDE) the composition is skewed to basic and acidic residues. Residues 129–150 (RKYPEPEKWNSEKERKKSDESC) are disordered. Cystine bridges form between Cys150–Cys165, Cys160–Cys181, and Cys163–Cys176.

The protein belongs to the protease inhibitor I19 family. As to expression, expressed by the venom gland.

Its subcellular location is the secreted. Inhibits trypsin activity and prophenoloxidase (PPO) activation, an enzyme essential for both clotting and insect innate immune responses. It does not inhibit activity of chymotrypsin and protease K, and has no effect on phenoloxidase (PO) activity. The polypeptide is Pacifastin-like protease inhibitor cvp4 (Pimpla hypochondriaca (Parasitoid wasp)).